The following is a 154-amino-acid chain: Myoglobin (154 aa).

The region spanning 2 to 148 (GLSDGEWQLV…FRKDIAAKYK (147 aa)) is the Globin domain. Ser4 carries the post-translational modification Phosphoserine. A nitrite-binding site is contributed by His65. His65 provides a ligand contact to O2. Residue Thr68 is modified to Phosphothreonine. His94 contributes to the heme b binding site.

This sequence belongs to the globin family. Monomeric.

Its subcellular location is the cytoplasm. It is found in the sarcoplasm. The catalysed reaction is Fe(III)-heme b-[protein] + nitric oxide + H2O = Fe(II)-heme b-[protein] + nitrite + 2 H(+). It catalyses the reaction H2O2 + AH2 = A + 2 H2O. Its function is as follows. Monomeric heme protein which primary function is to store oxygen and facilitate its diffusion within muscle tissues. Reversibly binds oxygen through a pentacoordinated heme iron and enables its timely and efficient release as needed during periods of heightened demand. Depending on the oxidative conditions of tissues and cells, and in addition to its ability to bind oxygen, it also has a nitrite reductase activity whereby it regulates the production of bioactive nitric oxide. Under stress conditions, like hypoxia and anoxia, it also protects cells against reactive oxygen species thanks to its pseudoperoxidase activity. This is Myoglobin (MB) from Delphinus delphis (Short-beaked common dolphin).